Reading from the N-terminus, the 595-residue chain is UvrABC system protein C (595 aa).

A GIY-YIG domain is found at 14-91; it reads NNPGCYLHKD…IQENMPKFNI (78 aa). A UVR domain is found at 196–231; it reads DKIVNQLKAKMKDMSDQMEFERAAEYRDLIEAVSTL.

Belongs to the UvrC family. Interacts with UvrB in an incision complex.

The protein localises to the cytoplasm. Functionally, the UvrABC repair system catalyzes the recognition and processing of DNA lesions. UvrC both incises the 5' and 3' sides of the lesion. The N-terminal half is responsible for the 3' incision and the C-terminal half is responsible for the 5' incision. The protein is UvrABC system protein C of Streptococcus thermophilus (strain ATCC BAA-250 / LMG 18311).